The following is a 198-amino-acid chain: Alpha-S1-casein (198 aa).

The signal sequence occupies residues 1–15 (MKLLILTCLVASAVA). Disordered stretches follow at residues 28 to 47 (QTQRGGSSSSSSSEERLKEE) and 71 to 97 (SESTEQREASSISSSEEVVPKNTEQKH). A phosphoserine mark is found at Ser-39, Ser-80, Ser-81, Ser-83, Ser-84, and Ser-85.

The protein belongs to the alpha-casein family. In terms of tissue distribution, mammary gland specific. Secreted in milk.

It localises to the secreted. Functionally, important role in the capacity of milk to transport calcium phosphate. This chain is Alpha-S1-casein (CSN1S1), found in Cavia porcellus (Guinea pig).